Consider the following 119-residue polypeptide: MKKTYRVKREKDFQAIFKDGKSTANRKFVIYHLNRSQDHFRVGISVGKKIGNAVTRNAVKRKIRHVIMALGHQLKSEDFVVIARKGVESLEYQELQQNLHHVLKLAQLLEKGFESEEKH.

The protein belongs to the RnpA family. Consists of a catalytic RNA component (M1 or rnpB) and a protein subunit.

It catalyses the reaction Endonucleolytic cleavage of RNA, removing 5'-extranucleotides from tRNA precursor.. Functionally, RNaseP catalyzes the removal of the 5'-leader sequence from pre-tRNA to produce the mature 5'-terminus. It can also cleave other RNA substrates such as 4.5S RNA. The protein component plays an auxiliary but essential role in vivo by binding to the 5'-leader sequence and broadening the substrate specificity of the ribozyme. The protein is Ribonuclease P protein component of Streptococcus pyogenes serotype M5 (strain Manfredo).